The sequence spans 89 residues: Small ribosomal subunit protein uS15 (89 aa).

Over residues 1–21 (MVMTAEDKAQVIGEHKKHDGD) the composition is skewed to basic and acidic residues. Residues 1 to 24 (MVMTAEDKAQVIGEHKKHDGDTGS) form a disordered region.

It belongs to the universal ribosomal protein uS15 family. As to quaternary structure, part of the 30S ribosomal subunit. Forms a bridge to the 50S subunit in the 70S ribosome, contacting the 23S rRNA.

Functionally, one of the primary rRNA binding proteins, it binds directly to 16S rRNA where it helps nucleate assembly of the platform of the 30S subunit by binding and bridging several RNA helices of the 16S rRNA. Its function is as follows. Forms an intersubunit bridge (bridge B4) with the 23S rRNA of the 50S subunit in the ribosome. This is Small ribosomal subunit protein uS15 from Solidesulfovibrio magneticus (strain ATCC 700980 / DSM 13731 / RS-1) (Desulfovibrio magneticus).